Here is a 253-residue protein sequence, read N- to C-terminus: Chloride intracellular channel protein 4 (253 aa).

Ala2 is modified (N-acetylalanine). Positions 2-101 are required for insertion into the membrane; the sequence is ALSMPLNGLK…EEFLEEVLCP (100 aa). Ser4 bears the Phosphoserine mark. Lys24 is modified (N6-acetyllysine). A helical transmembrane segment spans residues 37–57; that stretch reads FSQRLFMILWLKGVVFSVSTV. The GST C-terminal domain occupies 81 to 244; sequence NSEVKTDVNK…PSDKEVEIAY (164 aa). Lys130 is subject to N6-acetyllysine. Phosphoserine occurs at positions 132, 167, and 236. Tyr244 is subject to Phosphotyrosine.

Belongs to the chloride channel CLIC family. In terms of assembly, monomer. Interacts with HRH3.

The protein localises to the cytoplasm. It is found in the cytoskeleton. It localises to the microtubule organizing center. The protein resides in the centrosome. Its subcellular location is the cytoplasmic vesicle membrane. The protein localises to the nucleus. It is found in the cell membrane. It localises to the mitochondrion. The protein resides in the cell junction. It carries out the reaction chloride(in) = chloride(out). The enzyme catalyses thiocyanate(in) = thiocyanate(out). The catalysed reaction is nitrate(in) = nitrate(out). It catalyses the reaction iodide(out) = iodide(in). It carries out the reaction bromide(in) = bromide(out). The enzyme catalyses fluoride(in) = fluoride(out). The catalysed reaction is choline(out) = choline(in). In the soluble state, catalyzes glutaredoxin-like thiol disulfide exchange reactions with reduced glutathione as electron donor. Can insert into membranes and form voltage-dependent multi-ion conductive channels. Membrane insertion seems to be redox-regulated and may occur only under oxidizing conditions. Has alternate cellular functions like a potential role in angiogenesis or in maintaining apical-basolateral membrane polarity during mitosis and cytokinesis. Could also promote endothelial cell proliferation and regulate endothelial morphogenesis (tubulogenesis). Promotes cell-surface expression of HRH3. The polypeptide is Chloride intracellular channel protein 4 (CLIC4) (Pongo abelii (Sumatran orangutan)).